The following is a 287-amino-acid chain: Pirin-1 (287 aa).

Thr2 is modified (N-acetylthreonine).

The protein belongs to the pirin family. Interacts with the G protein alpha-1 subunit GPA1. Interacts with NFYB6 and NFYB9.

The protein localises to the nucleus. Its function is as follows. Involved in abscisic acid signal transduction. Plays a role in seed germination and early seedling development. Involved in the blue light (BL) signaling. This chain is Pirin-1 (PRN1), found in Arabidopsis thaliana (Mouse-ear cress).